A 59-amino-acid chain; its full sequence is Large ribosomal subunit protein bL32 (59 aa).

The span at 1–16 (MAVPKRKTSPSRRGMR) shows a compositional bias: basic residues. The tract at residues 1-20 (MAVPKRKTSPSRRGMRRSHD) is disordered.

It belongs to the bacterial ribosomal protein bL32 family.

The sequence is that of Large ribosomal subunit protein bL32 from Novosphingobium aromaticivorans (strain ATCC 700278 / DSM 12444 / CCUG 56034 / CIP 105152 / NBRC 16084 / F199).